The following is a 351-amino-acid chain: DNA polymerase IV (351 aa).

A UmuC domain is found at 4–185 (IIHVDMDCFF…LPLAKIPGVG (182 aa)). Positions 8 and 103 each coordinate Mg(2+). Glu104 is a catalytic residue.

The protein belongs to the DNA polymerase type-Y family. As to quaternary structure, monomer. The cofactor is Mg(2+).

The protein localises to the cytoplasm. It carries out the reaction DNA(n) + a 2'-deoxyribonucleoside 5'-triphosphate = DNA(n+1) + diphosphate. In terms of biological role, poorly processive, error-prone DNA polymerase involved in untargeted mutagenesis. Copies undamaged DNA at stalled replication forks, which arise in vivo from mismatched or misaligned primer ends. These misaligned primers can be extended by PolIV. Exhibits no 3'-5' exonuclease (proofreading) activity. May be involved in translesional synthesis, in conjunction with the beta clamp from PolIII. The protein is DNA polymerase IV of Escherichia coli (strain ATCC 8739 / DSM 1576 / NBRC 3972 / NCIMB 8545 / WDCM 00012 / Crooks).